The chain runs to 329 residues: MSPPAATFDIPVANTGNGLSLKKDLAVKPAASGVAKSLAEIEHNWEKFTFAPIRESQVSRAMTRRYFNDLDTYAESDVVIIGAGSCGLSAAYTLASKRPDLKIAMVEAGVAPGGGAWLGGQLFSAMVMRKPAELFLNEIGVPYEDEGDFVVVKHAALFTSTLMSKVLNFPNVKLFNATAVEDLITRPAPTSNDPNAVRIAGVVTNWTLVSMHHDDQSCMDPNTINAPLIISTTGHDGPFGAFSVKRLVSMQQLPQLGGMRGLDMRTAEDAIVKRTREVVPGLIVGGMELSEVDGANRMGPTFGAMVLSGVKAAEEAIGVWDERKAQNDE.

Substrate contacts are provided by residues Cys86, 107–108, Gly115, and Val180; that span reads EA. A 2,3-didehydroalanine (Cys) modification is found at Cys218. Substrate is bound by residues Asp220, His235, Met287, and 297-299; that span reads RMG.

Belongs to the THI4 family. In terms of assembly, homooctamer. Requires Fe cation as cofactor. Post-translationally, during the catalytic reaction, a sulfide is transferred from Cys-218 to a reaction intermediate, generating a dehydroalanine residue.

The protein resides in the cytoplasm. It is found in the nucleus. The catalysed reaction is [ADP-thiazole synthase]-L-cysteine + glycine + NAD(+) = [ADP-thiazole synthase]-dehydroalanine + ADP-5-ethyl-4-methylthiazole-2-carboxylate + nicotinamide + 3 H2O + 2 H(+). Its function is as follows. Involved in biosynthesis of the thiamine precursor thiazole. Catalyzes the conversion of NAD and glycine to adenosine diphosphate 5-(2-hydroxyethyl)-4-methylthiazole-2-carboxylic acid (ADT), an adenylated thiazole intermediate. The reaction includes an iron-dependent sulfide transfer from a conserved cysteine residue of the protein to a thiazole intermediate. The enzyme can only undergo a single turnover, which suggests it is a suicide enzyme. May have additional roles in adaptation to various stress conditions and in DNA damage tolerance. The chain is Thiamine thiazole synthase from Phaeosphaeria nodorum (strain SN15 / ATCC MYA-4574 / FGSC 10173) (Glume blotch fungus).